The chain runs to 331 residues: 2-hydroxyacid dehydrogenase homolog (331 aa).

NAD(+) is bound by residues 154–155 (KI), 232–234 (TSR), and aspartate 258. Arginine 234 is an active-site residue. Glutamate 263 is an active-site residue. Residue histidine 295 is the Proton donor of the active site. An NAD(+)-binding site is contributed by 295–298 (HQAF).

The protein belongs to the D-isomer specific 2-hydroxyacid dehydrogenase family.

The protein is 2-hydroxyacid dehydrogenase homolog (ddh) of Haemophilus influenzae (strain ATCC 51907 / DSM 11121 / KW20 / Rd).